A 304-amino-acid polypeptide reads, in one-letter code: UTP--glucose-1-phosphate uridylyltransferase 1 (304 aa).

The protein belongs to the UDPGP type 2 family.

The enzyme catalyses alpha-D-glucose 1-phosphate + UTP + H(+) = UDP-alpha-D-glucose + diphosphate. It participates in carbohydrate metabolism; nucleotide-sugar metabolism. This chain is UTP--glucose-1-phosphate uridylyltransferase 1 (hasC1), found in Streptococcus pyogenes serotype M1.